A 76-amino-acid polypeptide reads, in one-letter code: ATP synthase subunit c (76 aa).

Helical transmembrane passes span 7 to 27 and 50 to 70; these read VATALAVGLGAIGPGVGIGII and FIGIAFTEALAIFGLVIAFLI.

This sequence belongs to the ATPase C chain family. F-type ATPases have 2 components, F(1) - the catalytic core - and F(0) - the membrane proton channel. F(1) has five subunits: alpha(3), beta(3), gamma(1), delta(1), epsilon(1). F(0) has four main subunits: a(1), b(1), b'(1) and c(10-14). The alpha and beta chains form an alternating ring which encloses part of the gamma chain. F(1) is attached to F(0) by a central stalk formed by the gamma and epsilon chains, while a peripheral stalk is formed by the delta, b and b' chains.

Its subcellular location is the cell membrane. In terms of biological role, f(1)F(0) ATP synthase produces ATP from ADP in the presence of a proton or sodium gradient. F-type ATPases consist of two structural domains, F(1) containing the extramembraneous catalytic core and F(0) containing the membrane proton channel, linked together by a central stalk and a peripheral stalk. During catalysis, ATP synthesis in the catalytic domain of F(1) is coupled via a rotary mechanism of the central stalk subunits to proton translocation. Key component of the F(0) channel; it plays a direct role in translocation across the membrane. A homomeric c-ring of between 10-14 subunits forms the central stalk rotor element with the F(1) delta and epsilon subunits. This Chloroflexus aurantiacus (strain ATCC 29366 / DSM 635 / J-10-fl) protein is ATP synthase subunit c.